The primary structure comprises 165 residues: MKSHGIVHKYGDNVDTDVIIPARYLNSSDPKELAKKCMEDIDKEFVNRVNLGDIMVANKNFGCGSSREHAPIAIKASGISCVIAETFARIFYRNAINIGLPIIECKEAARDIDAGNEVEIDFDSGIITNLTKGTSYQGQAFPEFMQKIMKADGLINYINEQLEAV.

This sequence belongs to the LeuD family. LeuD type 2 subfamily. As to quaternary structure, heterodimer of LeuC and LeuD.

The enzyme catalyses (2R,3S)-3-isopropylmalate = (2S)-2-isopropylmalate. It participates in amino-acid biosynthesis; L-leucine biosynthesis; L-leucine from 3-methyl-2-oxobutanoate: step 2/4. Its function is as follows. Catalyzes the isomerization between 2-isopropylmalate and 3-isopropylmalate, via the formation of 2-isopropylmaleate. In Lachnoclostridium phytofermentans (strain ATCC 700394 / DSM 18823 / ISDg) (Clostridium phytofermentans), this protein is 3-isopropylmalate dehydratase small subunit.